We begin with the raw amino-acid sequence, 94 residues long: Small ribosomal subunit protein uS19 (94 aa).

It belongs to the universal ribosomal protein uS19 family.

Its function is as follows. Protein S19 forms a complex with S13 that binds strongly to the 16S ribosomal RNA. This is Small ribosomal subunit protein uS19 from Halothermothrix orenii (strain H 168 / OCM 544 / DSM 9562).